We begin with the raw amino-acid sequence, 1036 residues long: Isoleucine--tRNA ligase (1036 aa).

The 'HIGH' region motif lies at 46-56 (PFATGLPHYGH). The 'KMSKS' region motif lies at 589-593 (KMSKR). Position 592 (K592) interacts with ATP.

Belongs to the class-I aminoacyl-tRNA synthetase family. IleS type 2 subfamily. Monomer. Zn(2+) serves as cofactor.

Its subcellular location is the cytoplasm. The enzyme catalyses tRNA(Ile) + L-isoleucine + ATP = L-isoleucyl-tRNA(Ile) + AMP + diphosphate. In terms of biological role, catalyzes the attachment of isoleucine to tRNA(Ile). As IleRS can inadvertently accommodate and process structurally similar amino acids such as valine, to avoid such errors it has two additional distinct tRNA(Ile)-dependent editing activities. One activity is designated as 'pretransfer' editing and involves the hydrolysis of activated Val-AMP. The other activity is designated 'posttransfer' editing and involves deacylation of mischarged Val-tRNA(Ile). The polypeptide is Isoleucine--tRNA ligase (Chlamydia muridarum (strain MoPn / Nigg)).